A 235-amino-acid polypeptide reads, in one-letter code: Segregation and condensation protein A (235 aa).

Belongs to the ScpA family. In terms of assembly, component of a cohesin-like complex composed of ScpA, ScpB and the Smc homodimer, in which ScpA and ScpB bind to the head domain of Smc. The presence of the three proteins is required for the association of the complex with DNA.

Its subcellular location is the cytoplasm. Its function is as follows. Participates in chromosomal partition during cell division. May act via the formation of a condensin-like complex containing Smc and ScpB that pull DNA away from mid-cell into both cell halves. This Streptococcus equi subsp. zooepidemicus (strain H70) protein is Segregation and condensation protein A.